A 901-amino-acid polypeptide reads, in one-letter code: Protein translocase subunit SecA (901 aa).

Residues glutamine 87, 105 to 109 (GEGKT), and aspartate 512 contribute to the ATP site. Positions 855 to 891 (QQLSHQDDETAAAAALAEQTGERKVGRNDPCPCGSGK) are disordered. Residues cysteine 885, cysteine 887, cysteine 896, and histidine 897 each coordinate Zn(2+).

The protein belongs to the SecA family. Monomer and homodimer. Part of the essential Sec protein translocation apparatus which comprises SecA, SecYEG and auxiliary proteins SecDF-YajC and YidC. The cofactor is Zn(2+).

It is found in the cell inner membrane. Its subcellular location is the cytoplasm. The catalysed reaction is ATP + H2O + cellular proteinSide 1 = ADP + phosphate + cellular proteinSide 2.. In terms of biological role, part of the Sec protein translocase complex. Interacts with the SecYEG preprotein conducting channel. Has a central role in coupling the hydrolysis of ATP to the transfer of proteins into and across the cell membrane, serving both as a receptor for the preprotein-SecB complex and as an ATP-driven molecular motor driving the stepwise translocation of polypeptide chains across the membrane. This chain is Protein translocase subunit SecA, found in Cronobacter sakazakii (strain ATCC BAA-894) (Enterobacter sakazakii).